Here is a 394-residue protein sequence, read N- to C-terminus: Putative nickel insertion protein (394 aa).

Belongs to the LarC family.

This chain is Putative nickel insertion protein, found in Syntrophotalea carbinolica (strain DSM 2380 / NBRC 103641 / GraBd1) (Pelobacter carbinolicus).